The following is a 289-amino-acid chain: Phosphatidylserine decarboxylase proenzyme (289 aa).

Residues aspartate 89, histidine 146, and serine 252 each act as charge relay system; for autoendoproteolytic cleavage activity in the active site. Serine 252 (schiff-base intermediate with substrate; via pyruvic acid; for decarboxylase activity) is an active-site residue. Residue serine 252 is modified to Pyruvic acid (Ser); by autocatalysis.

It belongs to the phosphatidylserine decarboxylase family. PSD-B subfamily. Prokaryotic type I sub-subfamily. Heterodimer of a large membrane-associated beta subunit and a small pyruvoyl-containing alpha subunit. Pyruvate serves as cofactor. Post-translationally, is synthesized initially as an inactive proenzyme. Formation of the active enzyme involves a self-maturation process in which the active site pyruvoyl group is generated from an internal serine residue via an autocatalytic post-translational modification. Two non-identical subunits are generated from the proenzyme in this reaction, and the pyruvate is formed at the N-terminus of the alpha chain, which is derived from the carboxyl end of the proenzyme. The autoendoproteolytic cleavage occurs by a canonical serine protease mechanism, in which the side chain hydroxyl group of the serine supplies its oxygen atom to form the C-terminus of the beta chain, while the remainder of the serine residue undergoes an oxidative deamination to produce ammonia and the pyruvoyl prosthetic group on the alpha chain. During this reaction, the Ser that is part of the protease active site of the proenzyme becomes the pyruvoyl prosthetic group, which constitutes an essential element of the active site of the mature decarboxylase.

Its subcellular location is the cell membrane. The catalysed reaction is a 1,2-diacyl-sn-glycero-3-phospho-L-serine + H(+) = a 1,2-diacyl-sn-glycero-3-phosphoethanolamine + CO2. It functions in the pathway phospholipid metabolism; phosphatidylethanolamine biosynthesis; phosphatidylethanolamine from CDP-diacylglycerol: step 2/2. Its function is as follows. Catalyzes the formation of phosphatidylethanolamine (PtdEtn) from phosphatidylserine (PtdSer). This Nitrosospira multiformis (strain ATCC 25196 / NCIMB 11849 / C 71) protein is Phosphatidylserine decarboxylase proenzyme.